We begin with the raw amino-acid sequence, 283 residues long: F-box only protein 27 (283 aa).

A disordered region spans residues 1–23; it reads MGASVSRGRAARVPAPEPEPEEA. Positions 23-70 constitute an F-box domain; sequence ALDLSQLPPELLLVVLSHVPPRTLLGRCRQVCRGWRALVDGQALWLLI. Positions 104–280 constitute an FBA domain; sequence FCARRPIGRN…VTNSSVIVRV (177 aa).

As to quaternary structure, part of a SCF (SKP1-cullin-F-box) protein ligase complex. Interacts with SKP1 and CUL1. In terms of tissue distribution, predominantly expressed in brain, heart and kidney. Expressed at lower levels in liver and lung.

Functionally, substrate-recognition component of the SCF (SKP1-CUL1-F-box protein)-type E3 ubiquitin ligase complex. Able to recognize and bind denatured glycoproteins, which are modified with complex-type oligosaccharides. The protein is F-box only protein 27 (FBXO27) of Homo sapiens (Human).